Here is a 380-residue protein sequence, read N- to C-terminus: Cytochrome b (380 aa).

Transmembrane regions (helical) follow at residues 34–54 (FGSL…LLAM), 78–99 (WLIR…YFHI), 114–134 (WNTG…GYVL), and 179–199 (FFAL…IHLT). Heme b is bound by residues histidine 84 and histidine 98. The heme b site is built by histidine 183 and histidine 197. Residue histidine 202 coordinates a ubiquinone. The next 4 helical transmembrane spans lie at 227-247 (LKDI…ALFS), 289-309 (LGGV…PFLH), 321-341 (ISQL…WVGS), and 348-368 (FIII…VLFP).

The protein belongs to the cytochrome b family. In terms of assembly, the cytochrome bc1 complex contains 11 subunits: 3 respiratory subunits (MT-CYB, CYC1 and UQCRFS1), 2 core proteins (UQCRC1 and UQCRC2) and 6 low-molecular weight proteins (UQCRH/QCR6, UQCRB/QCR7, UQCRQ/QCR8, UQCR10/QCR9, UQCR11/QCR10 and a cleavage product of UQCRFS1). This cytochrome bc1 complex then forms a dimer. Requires heme b as cofactor.

The protein resides in the mitochondrion inner membrane. In terms of biological role, component of the ubiquinol-cytochrome c reductase complex (complex III or cytochrome b-c1 complex) that is part of the mitochondrial respiratory chain. The b-c1 complex mediates electron transfer from ubiquinol to cytochrome c. Contributes to the generation of a proton gradient across the mitochondrial membrane that is then used for ATP synthesis. The sequence is that of Cytochrome b (MT-CYB) from Pachyptila salvini (Salvin's prion).